A 542-amino-acid polypeptide reads, in one-letter code: Chaperonin GroEL (542 aa).

ATP is bound by residues 29 to 32 (TLGP), 86 to 90 (DGTTT), glycine 413, 476 to 478 (NAA), and aspartate 492.

It belongs to the chaperonin (HSP60) family. Forms a cylinder of 14 subunits composed of two heptameric rings stacked back-to-back. Interacts with the co-chaperonin GroES.

The protein localises to the cytoplasm. The enzyme catalyses ATP + H2O + a folded polypeptide = ADP + phosphate + an unfolded polypeptide.. Its function is as follows. Together with its co-chaperonin GroES, plays an essential role in assisting protein folding. The GroEL-GroES system forms a nano-cage that allows encapsulation of the non-native substrate proteins and provides a physical environment optimized to promote and accelerate protein folding. The chain is Chaperonin GroEL from Lactococcus lactis subsp. lactis (strain IL1403) (Streptococcus lactis).